The chain runs to 819 residues: Nuclear pore complex protein Nup93 (819 aa).

Phosphothreonine is present on threonine 49. A phosphoserine mark is found at serine 52, serine 66, serine 72, serine 75, serine 80, serine 430, and serine 767.

This sequence belongs to the nucleoporin interacting component (NIC) family. Part of the nuclear pore complex (NPC). Component of the p62 complex, a complex composed of NUP62 and NUP54. Forms a complex with NUP35, NUP155, NUP205 and lamin B; the interaction with NUP35 is direct. Does not interact with TPR. Interacts with SMAD4 and IPO7; translocates SMAD4 to the nucleus through the NPC upon BMP7 stimulation resulting in activation of SMAD4 signaling.

It is found in the nucleus membrane. The protein localises to the nucleus. Its subcellular location is the nuclear pore complex. The protein resides in the nucleus envelope. Its function is as follows. Plays a role in the nuclear pore complex (NPC) assembly and/or maintenance. May anchor nucleoporins, but not NUP153 and TPR, to the NPC. During renal development, regulates podocyte migration and proliferation through SMAD4 signaling. In Bos taurus (Bovine), this protein is Nuclear pore complex protein Nup93 (NUP93).